Here is a 424-residue protein sequence, read N- to C-terminus: E3 ubiquitin-protein ligase RNF26 (424 aa).

5 helical membrane passes run 24–44 (LNFL…AFIY), 60–80 (GFLL…FGGL), 157–177 (ISTQ…TGPL), 183–203 (VVAA…ILLW), and 224–244 (VVFH…ILIV). The RING-type zinc finger occupies 371–413 (CVICQDQSKTVLLLPCRHLCLCQACTEILMRHPVYHRNCPLCR).

In terms of assembly, interacts with INCA1. Interacts with TMEM43, ENDOD1, TMEM33 and TMED1 to form a complex capable of modulating innate immune signaling through the cGAS-STING pathway. Interacts with UBE2J1; this interaction is important for SQSTM1 ubiquitination.

It is found in the endoplasmic reticulum membrane. It catalyses the reaction S-ubiquitinyl-[E2 ubiquitin-conjugating enzyme]-L-cysteine + [acceptor protein]-L-lysine = [E2 ubiquitin-conjugating enzyme]-L-cysteine + N(6)-ubiquitinyl-[acceptor protein]-L-lysine.. Its pathway is protein modification; protein ubiquitination. Functionally, E3 ubiquitin-protein ligase that plays a key role in endosome organization by retaining vesicles in the perinuclear cloud. Acts as a platform for perinuclear positioning of the endosomal system by mediating ubiquitination of SQSTM1 through interaction with the ubiquitin conjugating enzyme UBE2J1. Ubiquitinated SQSTM1 attracts specific vesicle-associated adapters, forming a molecular bridge that restrains cognate vesicles in the perinuclear region and organizes the endosomal pathway for efficient cargo transport. Also acts as a regulator of type I interferon production in response to viral infection by mediating the formation of 'Lys-11'-linked polyubiquitin chains on TMEM173/STING, leading to stabilize TMEM173/STING. Also required to limit type I interferon response by promoting autophagic degradation of IRF3. This chain is E3 ubiquitin-protein ligase RNF26, found in Mus musculus (Mouse).